The following is a 372-amino-acid chain: Cobalt-precorrin-5B C(1)-methyltransferase (372 aa).

Belongs to the CbiD family.

The catalysed reaction is Co-precorrin-5B + S-adenosyl-L-methionine = Co-precorrin-6A + S-adenosyl-L-homocysteine. Its pathway is cofactor biosynthesis; adenosylcobalamin biosynthesis; cob(II)yrinate a,c-diamide from sirohydrochlorin (anaerobic route): step 6/10. Catalyzes the methylation of C-1 in cobalt-precorrin-5B to form cobalt-precorrin-6A. In Prochlorococcus marinus (strain MIT 9515), this protein is Cobalt-precorrin-5B C(1)-methyltransferase.